The sequence spans 259 residues: Caffeoyl-CoA O-methyltransferase 1 (259 aa).

Residues 1-14 (MATTTTEATKTSST) show a composition bias toward low complexity. The disordered stretch occupies residues 1–29 (MATTTTEATKTSSTNGEDQKQSQNLRHQE). At Ala2 the chain carries N-acetylalanine. Residue Lys33 coordinates substrate. S-adenosyl-L-methionine contacts are provided by residues Thr75, Glu97, 99–100 (GV), Ser105, Asp123, and Ala152. Position 175 (Asp175) interacts with substrate. Asp175 provides a ligand contact to a divalent metal cation. An S-adenosyl-L-methionine-binding site is contributed by Asp177. A divalent metal cation-binding residues include Asp201 and Asn202. Position 206 (Asn206) interacts with substrate.

Belongs to the class I-like SAM-binding methyltransferase superfamily. Cation-dependent O-methyltransferase family. CCoAMT subfamily. It depends on a divalent metal cation as a cofactor. In terms of tissue distribution, expressed in stems and roots. Detected in leaves, siliques, flower buds, flowers. Expressed in the tapetum, but not in the endothecium. Detected in the vascular system of leaves and all flower organs, including stigma, stamens, petals and sepals.

The catalysed reaction is (E)-caffeoyl-CoA + S-adenosyl-L-methionine = (E)-feruloyl-CoA + S-adenosyl-L-homocysteine + H(+). The protein operates within aromatic compound metabolism; phenylpropanoid biosynthesis. Functionally, methylates caffeoyl-CoA to feruloyl-CoA. Has a very low activity with caffeic acid and esculetin. Involved in scopoletin biosynthesis in roots. This chain is Caffeoyl-CoA O-methyltransferase 1 (CCOAOMT1), found in Arabidopsis thaliana (Mouse-ear cress).